A 1177-amino-acid chain; its full sequence is DNA-directed RNA polymerase subunit beta (1177 aa).

Residues 1147–1161 (DDTEIEMRDTEDDDD) are compositionally biased toward acidic residues. Residues 1147-1177 (DDTEIEMRDTEDDDDHQSADKLNVEVETTKE) are disordered. Over residues 1162-1177 (HQSADKLNVEVETTKE) the composition is skewed to basic and acidic residues.

The protein belongs to the RNA polymerase beta chain family. As to quaternary structure, the RNAP catalytic core consists of 2 alpha, 1 beta, 1 beta' and 1 omega subunit. When a sigma factor is associated with the core the holoenzyme is formed, which can initiate transcription.

The catalysed reaction is RNA(n) + a ribonucleoside 5'-triphosphate = RNA(n+1) + diphosphate. Its function is as follows. DNA-dependent RNA polymerase catalyzes the transcription of DNA into RNA using the four ribonucleoside triphosphates as substrates. The chain is DNA-directed RNA polymerase subunit beta from Bacillus anthracis (strain A0248).